We begin with the raw amino-acid sequence, 1057 residues long: Hemophilin receptor (1057 aa).

In terms of domain architecture, TBDR plug spans 168–285 (KVYDANRSSV…VGGAVVVKTL (118 aa)). The 762-residue stretch at 296-1057 (SFGAELKVEG…TMKISWTTKF (762 aa)) folds into the TBDR beta-barrel domain.

It belongs to the TonB-dependent receptor family.

It is found in the cell outer membrane. Functionally, part of a high affinity heme acquisition system. Functions as a gateway for heme entry into the bacterial cell, enabling growth on hemoprotein sources. Can acquire heme directly from hemoprotein reservoirs, however, HphA likely enhances the efficiency of this process by delivering heme to HphR. Is essential for virulence, bacterial dissemination and growth in the blood. The protein is Hemophilin receptor of Acinetobacter baumannii.